We begin with the raw amino-acid sequence, 267 residues long: Protein I267L (267 aa).

Belongs to the asfivirus I267L family.

The polypeptide is Protein I267L (Ornithodoros (relapsing fever ticks)).